An 87-amino-acid chain; its full sequence is U3-theraphotoxin-Hhn1a 3 (87 aa).

Positions 1–24 (MVNMKASMFLTFAGLVLLFVVCYA) are cleaved as a signal peptide. Residues 25–52 (PESEEKEFPKEMLSSIFAVDNDFKQEER) constitute a propeptide that is removed on maturation. Cystine bridges form between Cys-54–Cys-67, Cys-61–Cys-72, and Cys-66–Cys-79.

The protein belongs to the neurotoxin 10 (Hwtx-1) family. 51 (Hntx-8) subfamily. Hntx-8 sub-subfamily. In terms of tissue distribution, expressed by the venom gland.

The protein localises to the secreted. Ion channel inhibitor. This Cyriopagopus hainanus (Chinese bird spider) protein is U3-theraphotoxin-Hhn1a 3.